The chain runs to 241 residues: Probable transcriptional regulatory protein RALTA_A0859 (241 aa).

It belongs to the TACO1 family.

The protein resides in the cytoplasm. The chain is Probable transcriptional regulatory protein RALTA_A0859 from Cupriavidus taiwanensis (strain DSM 17343 / BCRC 17206 / CCUG 44338 / CIP 107171 / LMG 19424 / R1) (Ralstonia taiwanensis (strain LMG 19424)).